A 2131-amino-acid polypeptide reads, in one-letter code: Protein Ycf2 (2131 aa).

1484-1491 (GSIGTGRS) contributes to the ATP binding site.

Belongs to the Ycf2 family.

Its subcellular location is the plastid. It is found in the chloroplast stroma. Probable ATPase of unknown function. Its presence in a non-photosynthetic plant (Epifagus virginiana) and experiments in tobacco indicate that it has an essential function which is probably not related to photosynthesis. The chain is Protein Ycf2 (ycf2-A) from Spinacia oleracea (Spinach).